Here is a 1356-residue protein sequence, read N- to C-terminus: Tenascin-R (1356 aa).

The N-terminal stretch at 1–31 (MGIEGETVVLKNMLIGVNLILLGSMLKPSEC) is a signal peptide. Asn55 carries N-linked (GlcNAc...) asparagine glycosylation. Residues 127–157 (CASSAQVLQELLSRIEMLEREVSVLRDQCNT) adopt a coiled-coil conformation. Ser176 carries an O-linked (Xyl...) (chondroitin sulfate) serine glycan. Asn180 and Asn198 each carry an N-linked (GlcNAc...) asparagine glycan. 3 EGF-like domains span residues 188 to 199 (CICNEGWFGKNC), 204 to 230 (CPLG…GDDC), and 235 to 261 (CPTD…GEDC). The O-linked (Xyl...) (chondroitin sulfate) serine glycan is linked to Ser271. Asn278 is a glycosylation site (N-linked (GlcNAc...) asparagine). EGF-like domains are found at residues 281–292 (CLCQEGYAGEDC) and 293–324 (SQRR…PDCS). 2 disulfides stabilise this stretch: Cys297–Cys307 and Cys314–Cys323. The O-linked (Xyl...) (chondroitin sulfate) serine glycan is linked to Ser302. 9 Fibronectin type-III domains span residues 328–419 (PPED…TPQG), 420–504 (LQFK…TVID), 505–596 (GPTQ…IDAP), 597–686 (KNLR…TELD), 687–776 (SPRD…FRPI), 777–864 (SHLH…TGID), 865–953 (PPKN…AMDS), 954–1040 (PMDL…TLLD), and 1041–1129 (PPAN…GGRV). Asn391, Asn469, and Asn580 each carry an N-linked (GlcNAc...) asparagine glycan. Ser723 is modified (phosphoserine). Residues Asn790, Asn868, Asn873, Asn1034, Asn1044, and Asn1259 are each glycosylated (N-linked (GlcNAc...) asparagine). One can recognise a Fibrinogen C-terminal domain in the interval 1127-1342 (GRVFSHPQDC…FVEMKMRPYI (216 aa)).

It belongs to the tenascin family. Forms oligomers. Interacts with TNC and FN1. Interacts with BCAN and ACAN in a calcium -dependent manner. Interacts with CNTN1, SCN2B, PTPRZ1, and CSPG3. Contains N-linked oligosaccharides, O-linked sialylated structures. Contains O-linked chondroitin sulfate glycosaminoglycans. Contains N-linked oligosaccharides with a sulfated carbohydrate structure type GalNAc-4-SO4 or HNK-1 (SO4-3-GlcUABeta1,3GalBeta1,4GlcNAc). The levels of HNK-1 rise and fall in parallel to those of TNR during postnatal development of the cerebellum. In contrast, levels of GalNAc-4-SO4 are regulated independently from those of TNR, rising late in cerebellar development and continuing into adulthood. Early in postnatal development, GalNAc-4-SO4 is found predominantly on isoform 1, whereas in the adult it is predominantly on isoform 2. Brain-specific. Expressed in oligodendrocytes and small subsets of neurons (mainly interneurons and motoneurons) of the cerebellum, hippocampus and olfactory bulb. Expressed in dorsal root ganglia.

The protein localises to the secreted. It localises to the extracellular space. It is found in the extracellular matrix. In terms of biological role, neural extracellular matrix (ECM) protein involved in interactions with different cells and matrix components. Theses interactions can influence cellular behavior by either evoking a stable adhesion and differentiation, or repulsion and inhibition of neurite growth. Binding to cell surface gangliosides inhibits RGD-dependent integrin-mediated cell adhesion and results in an inhibition of PTK2/FAK1 (FAK) phosphorylation and cell detachment. Binding to membrane surface sulfatides results in a oligodendrocyte adhesion and differentiation. Interaction with CNTN1 induces a repulsion of neurons and an inhibition of neurite outgrowth. Interacts with SCN2B may play a crucial role in clustering and regulation of activity of sodium channels at nodes of Ranvier. TNR-linked chondroitin sulfate glycosaminoglycans are involved in the interaction with FN1 and mediates inhibition of cell adhesion and neurite outgrowth. The highly regulated addition of sulfated carbohydrate structure may modulate the adhesive properties of TNR over the course of development and during synapse maintenance. The protein is Tenascin-R (Tnr) of Rattus norvegicus (Rat).